The sequence spans 420 residues: Sulfate adenylyltransferase (420 aa).

It belongs to the sulfate adenylyltransferase family.

It carries out the reaction sulfate + ATP + H(+) = adenosine 5'-phosphosulfate + diphosphate. Its pathway is sulfur metabolism; hydrogen sulfide biosynthesis; sulfite from sulfate: step 1/3. The protein is Sulfate adenylyltransferase of Desulforudis audaxviator (strain MP104C).